We begin with the raw amino-acid sequence, 122 residues long: Ribonuclease P protein component (122 aa).

It belongs to the RnpA family. In terms of assembly, consists of a catalytic RNA component (M1 or rnpB) and a protein subunit.

The enzyme catalyses Endonucleolytic cleavage of RNA, removing 5'-extranucleotides from tRNA precursor.. In terms of biological role, RNaseP catalyzes the removal of the 5'-leader sequence from pre-tRNA to produce the mature 5'-terminus. It can also cleave other RNA substrates such as 4.5S RNA. The protein component plays an auxiliary but essential role in vivo by binding to the 5'-leader sequence and broadening the substrate specificity of the ribozyme. The protein is Ribonuclease P protein component of Lactobacillus helveticus (strain DPC 4571).